The chain runs to 679 residues: Probable metal-nicotianamine transporter YSL18 (679 aa).

Residues M1 to F17 show a composition bias toward basic and acidic residues. Residues M1–P21 form a disordered region. The next 14 membrane-spanning stretches (helical) occupy residues V29–M49, L51–F71, C101–M121, F144–P164, L211–F231, V255–I275, V309–L329, F379–Y399, V407–V427, I441–I461, V497–F517, L547–A567, F593–W613, and V627–A647.

The protein belongs to the YSL (TC 2.A.67.2) family.

The protein resides in the membrane. In terms of biological role, may be involved in the transport of nicotianamine-chelated metals. This is Probable metal-nicotianamine transporter YSL18 (YSL18) from Oryza sativa subsp. japonica (Rice).